A 335-amino-acid chain; its full sequence is Ferrochelatase (335 aa).

2 residues coordinate Fe cation: histidine 192 and glutamate 291.

The protein belongs to the ferrochelatase family.

It is found in the cytoplasm. The catalysed reaction is heme b + 2 H(+) = protoporphyrin IX + Fe(2+). It participates in porphyrin-containing compound metabolism; protoheme biosynthesis; protoheme from protoporphyrin-IX: step 1/1. In terms of biological role, catalyzes the ferrous insertion into protoporphyrin IX. The polypeptide is Ferrochelatase (Bdellovibrio bacteriovorus (strain ATCC 15356 / DSM 50701 / NCIMB 9529 / HD100)).